Consider the following 293-residue polypeptide: Small ribosomal subunit biogenesis GTPase RsgA (293 aa).

Residues 63–223 (QNELVRPPVA…VADTPGFSAL (161 aa)) form the CP-type G domain. GTP contacts are provided by residues 112-115 (SKID) and 166-174 (GQSGVGKSS). Positions 247, 252, 254, and 260 each coordinate Zn(2+).

Belongs to the TRAFAC class YlqF/YawG GTPase family. RsgA subfamily. As to quaternary structure, monomer. Associates with 30S ribosomal subunit, binds 16S rRNA. Zn(2+) is required as a cofactor.

It is found in the cytoplasm. Its function is as follows. One of several proteins that assist in the late maturation steps of the functional core of the 30S ribosomal subunit. Helps release RbfA from mature subunits. May play a role in the assembly of ribosomal proteins into the subunit. Circularly permuted GTPase that catalyzes slow GTP hydrolysis, GTPase activity is stimulated by the 30S ribosomal subunit. The chain is Small ribosomal subunit biogenesis GTPase RsgA from Geobacillus thermodenitrificans (strain NG80-2).